The following is an 858-amino-acid chain: NEDD4-binding protein 1 (858 aa).

Positions 17-37 (TCTEPPGGRQSPTASRAQPDS) are disordered. Residues 26-37 (QSPTASRAQPDS) are compositionally biased toward polar residues. Residues 96–180 (KEDVYKAKEY…VQQFVALFQE (85 aa)) enclose the KH-like domain. 2 disordered regions span residues 262 to 321 (EDKT…TWTV) and 388 to 424 (QKTQ…KEKE). The span at 285 to 316 (RSSESEQRDTKRQYSLERREEEQCEEREREPT) shows a compositional bias: basic and acidic residues. A compositionally biased stretch (polar residues) spans 389–418 (KTQSTQGAQRTSRTPDPSPCANASSTSTSN). The 153-residue stretch at 598-750 (LRHIIIDGSN…LGKHGPHLDE (153 aa)) folds into the RNase NYN domain. Positions 774 to 784 (SVYSQAAQSTA) are enriched in polar residues. A disordered region spans residues 774 to 823 (SVYSQAAQSTAHPSSPSHWPHSGPPDWHLPRPSPSPPPQRSPSETTELKR). Residues 785 to 799 (HPSSPSHWPHSGPPD) show a composition bias toward low complexity. Residues 804 to 813 (RPSPSPPPQR) are compositionally biased toward pro residues. Residues 813-858 (RSPSETTELKRKLYDIFPDQKQRIDRILSDNPYMRDLNALSGLLLG) are coCUN.

It belongs to the N4BP1 family.

It localises to the nucleus. The protein resides in the nucleolus. Its subcellular location is the PML body. Functionally, potent suppressor of cytokine production that acts as a regulator of innate immune signaling and inflammation. Acts as a key negative regulator of select cytokine and chemokine responses elicited by TRIF-independent Toll-like receptors (TLRs), thereby limiting inflammatory cytokine responses to minor insults. Has ribonuclease activity. This is NEDD4-binding protein 1 from Danio rerio (Zebrafish).